An 811-amino-acid chain; its full sequence is DNA gyrase subunit A (811 aa).

In terms of domain architecture, Topo IIA-type catalytic spans 30–493 (LPDVRDGLKP…LEEDIGKEDL (464 aa)). Tyr118 functions as the O-(5'-phospho-DNA)-tyrosine intermediate in the catalytic mechanism. Positions 520–526 (QGRGGRG) match the GyrA-box motif.

It belongs to the type II topoisomerase GyrA/ParC subunit family. As to quaternary structure, heterotetramer, composed of two GyrA and two GyrB chains. In the heterotetramer, GyrA contains the active site tyrosine that forms a transient covalent intermediate with DNA, while GyrB binds cofactors and catalyzes ATP hydrolysis.

The protein resides in the cytoplasm. The catalysed reaction is ATP-dependent breakage, passage and rejoining of double-stranded DNA.. Its function is as follows. A type II topoisomerase that negatively supercoils closed circular double-stranded (ds) DNA in an ATP-dependent manner to modulate DNA topology and maintain chromosomes in an underwound state. Negative supercoiling favors strand separation, and DNA replication, transcription, recombination and repair, all of which involve strand separation. Also able to catalyze the interconversion of other topological isomers of dsDNA rings, including catenanes and knotted rings. Type II topoisomerases break and join 2 DNA strands simultaneously in an ATP-dependent manner. This is DNA gyrase subunit A from Deinococcus deserti (strain DSM 17065 / CIP 109153 / LMG 22923 / VCD115).